The sequence spans 348 residues: Tetraacyldisaccharide 4'-kinase (348 aa).

50-57 (TMGGTGKT) contacts ATP.

This sequence belongs to the LpxK family.

The enzyme catalyses a lipid A disaccharide + ATP = a lipid IVA + ADP + H(+). Its pathway is glycolipid biosynthesis; lipid IV(A) biosynthesis; lipid IV(A) from (3R)-3-hydroxytetradecanoyl-[acyl-carrier-protein] and UDP-N-acetyl-alpha-D-glucosamine: step 6/6. Its function is as follows. Transfers the gamma-phosphate of ATP to the 4'-position of a tetraacyldisaccharide 1-phosphate intermediate (termed DS-1-P) to form tetraacyldisaccharide 1,4'-bis-phosphate (lipid IVA). In Desulfotalea psychrophila (strain LSv54 / DSM 12343), this protein is Tetraacyldisaccharide 4'-kinase.